Here is a 388-residue protein sequence, read N- to C-terminus: Mycinamicin VIII C21 methyl hydroxylase (388 aa).

Heme contacts are provided by His-87, Arg-91, Arg-279, His-335, and Cys-337.

The protein belongs to the cytochrome P450 family. Heme is required as a cofactor.

It participates in antibiotic biosynthesis; mycinamicin biosynthesis. Its function is as follows. Involved in the biosynthesis of mycinamicin, a 16-membered macrolide antibiotic. Catalyzes hydroxylation at the C21 methyl group of mycinamicin VIII, the earliest macrolide form in the postpolyketide synthase tailoring pathway, leading to mycinamicin VII. Uses ferredoxin MycCII in electron transfer for catalysis. This chain is Mycinamicin VIII C21 methyl hydroxylase, found in Micromonospora griseorubida.